Reading from the N-terminus, the 343-residue chain is DNA repair and recombination protein RadA (343 aa).

107–114 (GEFGAGKS) lines the ATP pocket.

It belongs to the eukaryotic RecA-like protein family.

Involved in DNA repair and in homologous recombination. Binds and assemble on single-stranded DNA to form a nucleoprotein filament. Hydrolyzes ATP in a ssDNA-dependent manner and promotes DNA strand exchange between homologous DNA molecules. The polypeptide is DNA repair and recombination protein RadA (Haloquadratum walsbyi (strain DSM 16790 / HBSQ001)).